Here is a 99-residue protein sequence, read N- to C-terminus: NADH-quinone oxidoreductase subunit K (99 aa).

The next 3 helical transmembrane spans lie at 3–23 (PMYY…GVLL), 28–48 (IIVF…LVTF), and 62–82 (FFVM…IVAI).

It belongs to the complex I subunit 4L family. NDH-1 is composed of 14 different subunits. Subunits NuoA, H, J, K, L, M, N constitute the membrane sector of the complex.

It localises to the cell membrane. The enzyme catalyses a quinone + NADH + 5 H(+)(in) = a quinol + NAD(+) + 4 H(+)(out). In terms of biological role, NDH-1 shuttles electrons from NADH, via FMN and iron-sulfur (Fe-S) centers, to quinones in the respiratory chain. The immediate electron acceptor for the enzyme in this species is believed to be a menaquinone. Couples the redox reaction to proton translocation (for every two electrons transferred, four hydrogen ions are translocated across the cytoplasmic membrane), and thus conserves the redox energy in a proton gradient. The sequence is that of NADH-quinone oxidoreductase subunit K from Acidothermus cellulolyticus (strain ATCC 43068 / DSM 8971 / 11B).